Consider the following 158-residue polypeptide: Small ribosomal subunit protein uS9 (158 aa).

The protein belongs to the universal ribosomal protein uS9 family.

The chain is Small ribosomal subunit protein uS9 from Brucella anthropi (strain ATCC 49188 / DSM 6882 / CCUG 24695 / JCM 21032 / LMG 3331 / NBRC 15819 / NCTC 12168 / Alc 37) (Ochrobactrum anthropi).